We begin with the raw amino-acid sequence, 44 residues long: 2S seed storage albumin protein (44 aa).

2 disulfides stabilise this stretch: Cys-7/Cys-42 and Cys-19/Cys-31.

It belongs to the 2S seed storage albumins family. The mature protein consists of a small and a large chain linked by 2 disulfide bonds.

Functionally, this is a 2S seed storage protein. Has antifungal activity. Inhibits spore germination in H.sativum (IC(50)=62.5 ug/ml) and P.betae (IC(50)=62.5 ug/ml). Inhibits growth of H.sativum, V.albo-atrum and P.infestans. The sequence is that of 2S seed storage albumin protein from Taraxacum officinale (Common dandelion).